Reading from the N-terminus, the 522-residue chain is Amine oxidase [flavin-containing] (522 aa).

The Cytoplasmic segment spans residues 1–492 (MTAQNTFDVI…FWERNLPSVG (492 aa)). An S-8alpha-FAD cysteine modification is found at cysteine 399. Residues 493–513 (GFINFLAASVLSVATAAGMLA) form a helical; Anchor for type IV membrane protein membrane-spanning segment. The Mitochondrial intermembrane portion of the chain corresponds to 514-522 (YQKGLLTRS).

This sequence belongs to the flavin monoamine oxidase family. It depends on FAD as a cofactor.

The protein localises to the mitochondrion outer membrane. It catalyses the reaction a secondary aliphatic amine + O2 + H2O = a primary amine + an aldehyde + H2O2. Its function is as follows. Catalyzes the oxidative deamination of biogenic and xenobiotic amines and has important functions in the metabolism of neuroactive and vasoactive amines in the central nervous system and peripheral tissues. Oxidizes both 5-hydroxytryptamine (5-HT) and beta-phenylethylamine (PEA). The sequence is that of Amine oxidase [flavin-containing] (mao) from Oncorhynchus mykiss (Rainbow trout).